The following is a 131-amino-acid chain: Global transcriptional regulator Spx (131 aa).

A disulfide bridge connects residues cysteine 10 and cysteine 13.

This sequence belongs to the ArsC family. Spx subfamily. Interacts with the C-terminal domain of the alpha subunit of the RNAP.

It is found in the cytoplasm. In terms of biological role, global transcriptional regulator that plays a key role in stress response and exerts either positive or negative regulation of genes. Acts by interacting with the C-terminal domain of the alpha subunit of the RNA polymerase (RNAP). This interaction can enhance binding of RNAP to the promoter region of target genes and stimulate their transcription, or block interaction of RNAP with activator. This Staphylococcus saprophyticus subsp. saprophyticus (strain ATCC 15305 / DSM 20229 / NCIMB 8711 / NCTC 7292 / S-41) protein is Global transcriptional regulator Spx.